We begin with the raw amino-acid sequence, 341 residues long: UDP-3-O-acylglucosamine N-acyltransferase (341 aa).

His-242 functions as the Proton acceptor in the catalytic mechanism.

It belongs to the transferase hexapeptide repeat family. LpxD subfamily. Homotrimer.

The enzyme catalyses a UDP-3-O-[(3R)-3-hydroxyacyl]-alpha-D-glucosamine + a (3R)-hydroxyacyl-[ACP] = a UDP-2-N,3-O-bis[(3R)-3-hydroxyacyl]-alpha-D-glucosamine + holo-[ACP] + H(+). The protein operates within bacterial outer membrane biogenesis; LPS lipid A biosynthesis. Catalyzes the N-acylation of UDP-3-O-acylglucosamine using 3-hydroxyacyl-ACP as the acyl donor. Is involved in the biosynthesis of lipid A, a phosphorylated glycolipid that anchors the lipopolysaccharide to the outer membrane of the cell. The sequence is that of UDP-3-O-acylglucosamine N-acyltransferase from Haemophilus influenzae (strain 86-028NP).